Reading from the N-terminus, the 284-residue chain is Protein phosphatase 1 regulatory subunit 3B (284 aa).

The PP1-binding motif motif lies at 61–64; that stretch reads RVSF. Residues 124 to 232 form the CBM21 domain; sequence RNRLQTDHVC…SNKGKNYRII (109 aa). A Phosphoserine modification is found at Ser-260.

Interacts with glycogen, PPP1CC catalytic subunit of PP1 and PYGL. Associates with glycogen particles. Forms complexes with debranching enzyme, glycogen phosphorylase, glycogen synthase and phosphorylase kinase which is necessary for its regulation of PP1 activity.

Acts as a glycogen-targeting subunit for phosphatase PP1. Facilitates interaction of the PP1 with enzymes of the glycogen metabolism and regulates its activity. Suppresses the rate at which PP1 dephosphorylates (inactivates) glycogen phosphorylase and enhances the rate at which it activates glycogen synthase and therefore limits glycogen breakdown. Its activity is inhibited by PYGL, resulting in inhibition of the glycogen synthase and glycogen phosphorylase phosphatase activities of PP1. Dramatically increases basal and insulin-stimulated glycogen synthesis upon overexpression in hepatocytes. The chain is Protein phosphatase 1 regulatory subunit 3B (PPP1R3B) from Bos taurus (Bovine).